A 364-amino-acid polypeptide reads, in one-letter code: Aminomethyltransferase (364 aa).

Belongs to the GcvT family. In terms of assembly, the glycine cleavage system is composed of four proteins: P, T, L and H.

The catalysed reaction is N(6)-[(R)-S(8)-aminomethyldihydrolipoyl]-L-lysyl-[protein] + (6S)-5,6,7,8-tetrahydrofolate = N(6)-[(R)-dihydrolipoyl]-L-lysyl-[protein] + (6R)-5,10-methylene-5,6,7,8-tetrahydrofolate + NH4(+). In terms of biological role, the glycine cleavage system catalyzes the degradation of glycine. This chain is Aminomethyltransferase, found in Salmonella enteritidis PT4 (strain P125109).